Reading from the N-terminus, the 81-residue chain is MNPVISAASVIAAGLAVGLASIGPGIGQGTAAGQAVEGIARQPEAEGKIRGTLLLSLAFMEALTIYGLVVALALLFANPFV.

2 helical membrane passes run 7–27 and 57–77; these read AASV…PGIG and LAFM…LLFA.

It belongs to the ATPase C chain family. In terms of assembly, F-type ATPases have 2 components, F(1) - the catalytic core - and F(0) - the membrane proton channel. F(1) has five subunits: alpha(3), beta(3), gamma(1), delta(1), epsilon(1). F(0) has four main subunits: a(1), b(1), b'(1) and c(10-14). The alpha and beta chains form an alternating ring which encloses part of the gamma chain. F(1) is attached to F(0) by a central stalk formed by the gamma and epsilon chains, while a peripheral stalk is formed by the delta, b and b' chains.

The protein resides in the plastid. It is found in the chloroplast thylakoid membrane. In terms of biological role, f(1)F(0) ATP synthase produces ATP from ADP in the presence of a proton or sodium gradient. F-type ATPases consist of two structural domains, F(1) containing the extramembraneous catalytic core and F(0) containing the membrane proton channel, linked together by a central stalk and a peripheral stalk. During catalysis, ATP synthesis in the catalytic domain of F(1) is coupled via a rotary mechanism of the central stalk subunits to proton translocation. Its function is as follows. Key component of the F(0) channel; it plays a direct role in translocation across the membrane. A homomeric c-ring of between 10-14 subunits forms the central stalk rotor element with the F(1) delta and epsilon subunits. The polypeptide is ATP synthase subunit c, chloroplastic (Staurastrum punctulatum (Green alga)).